Consider the following 619-residue polypeptide: Telomere repeat-binding protein 3 (619 aa).

The 80-residue stretch at 324 to 403 (VKLSIKSFRI…LDNLGFTLEP (80 aa)) folds into the Ubiquitin-like domain. The 60-residue stretch at 504–563 (AQRRTRRPFSVTEVEALVQAVEELGTGRWRDVKLRAFEDADHRTYVDLKDKWKTLVHTAS) folds into the HTH myb-type domain. A DNA-binding region (H-T-H motif) is located at residues 532–559 (WRDVKLRAFEDADHRTYVDLKDKWKTLV). Residues 593–619 (QGKHQARGASKDPDMNRGGAFESGVSV) are disordered.

Homodimer and heterodimer with TRP1. Expressed ubiquitously. Highest expression in flowers and roots.

It localises to the nucleus. In terms of biological role, binds specifically to the plant telomeric double-stranded DNA sequences. At least 2 repeats of telomeric sequences are required for binding. Induces DNA bending. The chain is Telomere repeat-binding protein 3 (TRP3) from Arabidopsis thaliana (Mouse-ear cress).